Here is a 335-residue protein sequence, read N- to C-terminus: D-alanine--D-alanine ligase (335 aa).

Residues 124 to 330 (KMWFSALGVP…FTEYLSDVIS (207 aa)) enclose the ATP-grasp domain. 154–209 (AFDTWGSVFIKAASQGSSVGCYKVDVRDNIAKVLEEAFGYAPYVVVEKTIKARELE) is a binding site for ATP. Residues D284, E297, and N299 each contribute to the Mg(2+) site.

The protein belongs to the D-alanine--D-alanine ligase family. Requires Mg(2+) as cofactor. The cofactor is Mn(2+).

Its subcellular location is the cytoplasm. It carries out the reaction 2 D-alanine + ATP = D-alanyl-D-alanine + ADP + phosphate + H(+). It functions in the pathway cell wall biogenesis; peptidoglycan biosynthesis. Cell wall formation. The chain is D-alanine--D-alanine ligase from Shewanella denitrificans (strain OS217 / ATCC BAA-1090 / DSM 15013).